A 459-amino-acid chain; its full sequence is Fibrous sheath-interacting protein 1 (459 aa).

Residues 1 to 54 are disordered; sequence MDITKGSLDEIARPASSSRSRPGSRVSTSLSTEKPKRSSTSLSLEILNPEPGFS. Residues 13-29 are compositionally biased toward low complexity; sequence RPASSSRSRPGSRVSTS. The stretch at 162–202 forms a coiled coil; it reads KMERAIKRMQALDDILQRKLAKEKEVKAQGLEIRIKLWEEL. Residues 252 to 289 are disordered; sequence QLPNEDPVEDDDHKTLQGNMTGADSSDRSDCKTRHSKG. The span at 276–289 shows a compositional bias: basic and acidic residues; sequence SSDRSDCKTRHSKG.

It belongs to the FSIP1 family.

The chain is Fibrous sheath-interacting protein 1 (fsip1) from Xenopus laevis (African clawed frog).